Here is a 603-residue protein sequence, read N- to C-terminus: UPF0313 protein MJ1155 (603 aa).

One can recognise a Radical SAM core domain in the interval 285 to 557 (GIVPVQFSVV…KIQKAICLYR (273 aa)). [4Fe-4S] cluster is bound by residues C299, C303, and C306.

The protein belongs to the UPF0313 family. The cofactor is [4Fe-4S] cluster.

The chain is UPF0313 protein MJ1155 from Methanocaldococcus jannaschii (strain ATCC 43067 / DSM 2661 / JAL-1 / JCM 10045 / NBRC 100440) (Methanococcus jannaschii).